A 1406-amino-acid chain; its full sequence is MLMQVEKKKLLSQADIPTKFDPINYLGEYLMRHNTHYIKDPGVSGYQRVMKEITEELKTHVPDTINNRISKMKEKVKEKREQREYISTVKVKVAGMRKQALEEQFNEWVLNPKGMIPIVVYISSYITDLKSEVFEEFLKHLCHSAEEFREIILTDMRRQMFAELFLQCDSGKVMALDRQRTLALLEAFYDQCSSTTRSLLRNPRQWPFVEFEEIELIEFWGDMDIKKHIYEDFDALLLKMNMLVAEKLAGKLAENKDLPQQQRDQELSSDSTTEPETATQLTSQQRSRRVSLTGQGQGKGPRKTSASKQGASRGSVAEQGSRRSSGVNQTQQRGSVAEQGSRRSSAVEQTQQRGSVAEQGSRRSSTVEQTRQRGSVAEQGSRRSSTVEQTQRRGSVAEQGSRRSSGVNQTQQRGSVAEQGSRRSSAVEQTQQRGSVAEQGSRRSSAMEQEPQTAQDPNSDSLPEQESHRGSITEGSHRGSISEPGQRRASVTGQRRKSSVDDSGSAGSRRGSGTDQGQHRGSVGQRKGSGERKMSASEYGPHQESITEEPLTASEPGPQIDTIQELDEDSTPQLEDDSALKESKTSELTKIETQEEKPLLLINEEQVPRDSKQPEVPTSSKKERPSGSPKKGRLSGTSKRDSQKDKACEPKPQHVEGKKWSGEFLICDWKIKHVKSEEEEQAKLICDDTRFTDLHATIRNFQTYKGIKGRSAFNGVSLDLLQFVQLLETFVGEDTSFSLSKDLASFFQKNYSETKQEKIKALEQARQNSSRIRRRILLQAIFEKWDNDGSGFLDLNEVDDLLYTYKEGMERESMKKAKLHINFPEPSPGHEVKLSSKQFQRYIELVVSELRGNEDEVLESVVEFLMGSLERSHVEGLRNCARRKWLHQIQYAAETSGVSLEPVYTETFRVLTQDAEAHGNKKISAHISLLEENVFLPERGHVLLRNVACTLDDAPFVLNKVLYRDMKGISFTVVDEGKPIHVPQVQHHGNIFFWNSFRSKNEYNGSFLALPLQDAYMRIFGVLAVDTLRDPHEINIFLPHEIKFYQGVANAFSTAYHHVHSREHVLHSVMTGIRWLFSVTSGITTITTCFIEPSSEQEDYVLRNMMVTDCLGLAEIHTDPPTITRNACIFRDFLFKCTDTSEVILASSGGETHIAIPLRQRTKEAMGILDVNIGRSRMLLYQEYKDLQKMVKMIQNVSYEILGEFSGEIEKTMVIEMESAGEVKRAGILFFRTMLQELQECLCLLDSMDFVSLLLYEHKYHVDSILQDITLQEVEANVALVHDVLKGVILFSQREKDSLSDLEEWEKWKFHINKYLVEEICVLDPTASNVEVNVELVTSYIQAHSRTEVWNFRNIVIELLYHWINICLTLIELNMRQDVSIIPPLPKKSATSIYAISSERSIREKL.

Residues 255-655 (NKDLPQQQRD…KACEPKPQHV (401 aa)) are disordered. Composition is skewed to polar residues over residues 258-294 (LPQQ…SLTG), 322-334 (RRSS…QQRG), 342-354 (RRSS…QQRG), 362-373 (RRSSTVEQTRQR), 382-393 (RRSSTVEQTQRR), 402-414 (RRSS…QQRG), 422-434 (RRSS…QQRG), and 442-464 (RRSS…SLPE). Positions 465–477 (QESHRGSITEGSH) are enriched in basic and acidic residues. Positions 501-513 (DDSGSAGSRRGSG) are enriched in low complexity. Acidic residues predominate over residues 564–577 (QELDEDSTPQLEDD). Basic and acidic residues-rich tracts occupy residues 578 to 598 (SALK…EEKP) and 638 to 655 (SKRD…PQHV). Residues 773–808 (RRRILLQAIFEKWDNDGSGFLDLNEVDDLLYTYKEG) enclose the EF-hand domain. Ca(2+)-binding residues include aspartate 786, aspartate 788, serine 790, and glutamate 797.

This chain is EF-hand calcium-binding domain-containing protein 5 (Efcab5), found in Mus musculus (Mouse).